A 247-amino-acid chain; its full sequence is Phosphoribosylaminoimidazole-succinocarboxamide synthase (247 aa).

The protein belongs to the SAICAR synthetase family.

It carries out the reaction 5-amino-1-(5-phospho-D-ribosyl)imidazole-4-carboxylate + L-aspartate + ATP = (2S)-2-[5-amino-1-(5-phospho-beta-D-ribosyl)imidazole-4-carboxamido]succinate + ADP + phosphate + 2 H(+). It participates in purine metabolism; IMP biosynthesis via de novo pathway; 5-amino-1-(5-phospho-D-ribosyl)imidazole-4-carboxamide from 5-amino-1-(5-phospho-D-ribosyl)imidazole-4-carboxylate: step 1/2. The protein is Phosphoribosylaminoimidazole-succinocarboxamide synthase of Synechococcus sp. (strain JA-2-3B'a(2-13)) (Cyanobacteria bacterium Yellowstone B-Prime).